The sequence spans 235 residues: Probable transcriptional regulatory protein MPN_478 (235 aa).

Belongs to the TACO1 family.

It localises to the cytoplasm. This Mycoplasma pneumoniae (strain ATCC 29342 / M129 / Subtype 1) (Mycoplasmoides pneumoniae) protein is Probable transcriptional regulatory protein MPN_478.